The primary structure comprises 249 residues: Chromosome segregation and cytokinesis defective protein 1 (249 aa).

The stretch at 12 to 48 forms a coiled coil; the sequence is VVAMADTLETRVKDLLEEYKKKLREVALQTAKAESDR. 3 disordered regions span residues 70-89, 94-183, and 208-249; these read PDDF…AAVA, LPSE…PEKP, and TTAT…GTSV. A compositionally biased stretch (acidic residues) spans 73–85; sequence FYIESGEEEEEGE. Positions 109-126 are enriched in polar residues; that stretch reads QKTSIPIGQNSGRNTVQV. Residues 224–236 are compositionally biased toward low complexity; that stretch reads SGAASKKAAAAAG.

This sequence belongs to the borealin family. Highly divergent. In terms of assembly, component of the CPC complex which consists of icp-1; csc-1; bir-1 and air-2. Within the complex interacts with Aurora B/air-2, bir-1 and icp-1.

It is found in the nucleus. The protein localises to the chromosome. The protein resides in the centromere. Its subcellular location is the cytoplasm. It localises to the cytoskeleton. It is found in the spindle. In terms of biological role, component of the chromosomal passenger complex (CPC), a complex that acts as a key regulator of chromosome segregation and cytokinesis during mitosis. The CPC complex has essential functions at the centromere in ensuring correct chromosome alignment and segregation. In the complex, it may be required to direct the Aurora B/air-2 to centromeric DNA. The sequence is that of Chromosome segregation and cytokinesis defective protein 1 (csc-1) from Caenorhabditis elegans.